Reading from the N-terminus, the 407-residue chain is 1-deoxy-D-xylulose 5-phosphate reductoisomerase (407 aa).

NADPH is bound by residues T25, G26, S27, I28, N53, and N136. K137 is a 1-deoxy-D-xylulose 5-phosphate binding site. Residue E138 coordinates NADPH. D162 contacts Mn(2+). 1-deoxy-D-xylulose 5-phosphate is bound by residues S163, E164, S188, and H211. E164 serves as a coordination point for Mn(2+). G217 provides a ligand contact to NADPH. Positions 224, 229, 230, and 233 each coordinate 1-deoxy-D-xylulose 5-phosphate. E233 contributes to the Mn(2+) binding site.

This sequence belongs to the DXR family. The cofactor is Mg(2+). It depends on Mn(2+) as a cofactor.

It catalyses the reaction 2-C-methyl-D-erythritol 4-phosphate + NADP(+) = 1-deoxy-D-xylulose 5-phosphate + NADPH + H(+). It participates in isoprenoid biosynthesis; isopentenyl diphosphate biosynthesis via DXP pathway; isopentenyl diphosphate from 1-deoxy-D-xylulose 5-phosphate: step 1/6. In terms of biological role, catalyzes the NADPH-dependent rearrangement and reduction of 1-deoxy-D-xylulose-5-phosphate (DXP) to 2-C-methyl-D-erythritol 4-phosphate (MEP). The polypeptide is 1-deoxy-D-xylulose 5-phosphate reductoisomerase (Bradyrhizobium sp. (strain BTAi1 / ATCC BAA-1182)).